The sequence spans 708 residues: Soluble guanylate cyclase gcy-37 (708 aa).

A heme-binding site is contributed by H105. Residues 368–409 (LNQSRICQMELNKKLEETMKKMKKMTEELEVKKSQTDRLLFE) are a coiled coil. In terms of domain architecture, Guanylate cyclase spans 434–562 (SVIFTDIPDF…NTVNVTKSIC (129 aa)). Mg(2+)-binding residues include D439 and D483.

The protein belongs to the adenylyl cyclase class-4/guanylyl cyclase family. As to quaternary structure, heterodimer; with other soluble guanylate cyclases. Requires heme as cofactor. In terms of tissue distribution, expressed in a small number of neurons, corresponding to URX, AQR and PQR neurons.

The protein localises to the cytoplasm. The enzyme catalyses GTP = 3',5'-cyclic GMP + diphosphate. May be regulated by molecular oxygen. Probably not activated by nitric oxide (NO). Its function is as follows. Synthesizes cyclic GMP (cGMP) from GTP. May play a role in sensory neurons. The protein is Soluble guanylate cyclase gcy-37 (gcy-37) of Caenorhabditis elegans.